We begin with the raw amino-acid sequence, 513 residues long: ATP synthase subunit alpha (513 aa).

ATP is bound at residue 169 to 176 (GDRQTGKT).

Belongs to the ATPase alpha/beta chains family. As to quaternary structure, F-type ATPases have 2 components, CF(1) - the catalytic core - and CF(0) - the membrane proton channel. CF(1) has five subunits: alpha(3), beta(3), gamma(1), delta(1), epsilon(1). CF(0) has three main subunits: a(1), b(2) and c(9-12). The alpha and beta chains form an alternating ring which encloses part of the gamma chain. CF(1) is attached to CF(0) by a central stalk formed by the gamma and epsilon chains, while a peripheral stalk is formed by the delta and b chains.

The protein resides in the cell inner membrane. The catalysed reaction is ATP + H2O + 4 H(+)(in) = ADP + phosphate + 5 H(+)(out). Functionally, produces ATP from ADP in the presence of a proton gradient across the membrane. The alpha chain is a regulatory subunit. The chain is ATP synthase subunit alpha from Actinobacillus pleuropneumoniae serotype 3 (strain JL03).